A 352-amino-acid chain; its full sequence is N-acetyl-gamma-glutamyl-phosphate reductase (352 aa).

Residue cysteine 155 is part of the active site.

It belongs to the NAGSA dehydrogenase family. Type 1 subfamily.

It is found in the cytoplasm. The enzyme catalyses N-acetyl-L-glutamate 5-semialdehyde + phosphate + NADP(+) = N-acetyl-L-glutamyl 5-phosphate + NADPH + H(+). Its pathway is amino-acid biosynthesis; L-arginine biosynthesis; N(2)-acetyl-L-ornithine from L-glutamate: step 3/4. Functionally, catalyzes the NADPH-dependent reduction of N-acetyl-5-glutamyl phosphate to yield N-acetyl-L-glutamate 5-semialdehyde. The sequence is that of N-acetyl-gamma-glutamyl-phosphate reductase from Rippkaea orientalis (strain PCC 8801 / RF-1) (Cyanothece sp. (strain PCC 8801)).